We begin with the raw amino-acid sequence, 771 residues long: MIIDADYITEDGKPIIRIFKKEKGEFKVEYDRTFRPYIYALLKDDSAIDEVKKITAERHGKIVRITEVEKVQKKFLGRPIEVWKLYLEHPQDVPAIREKIREHPAVVDIFEYDIPFAKRYLIDKGLTPMEGNEELTFLAVDIETLYHEGEEFGKGPIIMISYADEEGAKVITWKSIDLPYVEVVSSEREMIKRLVKVIREKDPDVIITYNGDNFDFPYLLKRAEKLGIKLPLGRDNSEPKMQRMGDSLAVEIKGRIHFDLFPVIRRTINLPTYTLEAVYEAIFGKSKEKVYAHEIAEAWETGKGLERVAKYSMEDAKVTFELGKEFFPMEAQLARLVGQPVWDVSRSSTGNLVEWFLLRKAYERNELAPNKPDEREYERRLRESYEGGYVKEPEKGLWEGIVSLDFRSLYPSIIITHNVSPDTLNRENCKEYDVAPQVGHRFCKDFPGFIPSLLGNLLEERQKIKKRMKESKDPVEKKLLDYRQRAIKILANSYYGYYGYAKARWYCKECAESVTAWGRQYIDLVRRELESSGFKVLYIDTDGLYATIPGAKPNEIKEKALKFVEYINSKLPGLLELEYEGFYARGFFVTKKKYALIDEEGKIVTRGLEIVRRDWSEIAKETQAKVLEAILKHGNVDEAVKIVKEVTEKLSKYEIPPEKLVIYEQITRPLSEYKAIGPHVAVAKRLAAKGVKVKPGMVIGYIVLRGDGPISKRAIAIEEFDPKKHKYDAEYYIENQVLPAVERILRAFGYRKEDLRYQKTKQVGLGAWLKF.

Belongs to the DNA polymerase type-B family.

The catalysed reaction is DNA(n) + a 2'-deoxyribonucleoside 5'-triphosphate = DNA(n+1) + diphosphate. In Pyrococcus abyssi, this protein is DNA polymerase 1 (polI).